Consider the following 162-residue polypeptide: 6,7-dimethyl-8-ribityllumazine synthase (162 aa).

5-amino-6-(D-ribitylamino)uracil contacts are provided by residues Tyr27, 58-60 (ALE), and 87-89 (CVI). 92–93 (ET) provides a ligand contact to (2S)-2-hydroxy-3-oxobutyl phosphate. The active-site Proton donor is the His95. Asn120 lines the 5-amino-6-(D-ribitylamino)uracil pocket. Arg134 is a binding site for (2S)-2-hydroxy-3-oxobutyl phosphate.

The protein belongs to the DMRL synthase family.

The enzyme catalyses (2S)-2-hydroxy-3-oxobutyl phosphate + 5-amino-6-(D-ribitylamino)uracil = 6,7-dimethyl-8-(1-D-ribityl)lumazine + phosphate + 2 H2O + H(+). Its pathway is cofactor biosynthesis; riboflavin biosynthesis; riboflavin from 2-hydroxy-3-oxobutyl phosphate and 5-amino-6-(D-ribitylamino)uracil: step 1/2. Functionally, catalyzes the formation of 6,7-dimethyl-8-ribityllumazine by condensation of 5-amino-6-(D-ribitylamino)uracil with 3,4-dihydroxy-2-butanone 4-phosphate. This is the penultimate step in the biosynthesis of riboflavin. The chain is 6,7-dimethyl-8-ribityllumazine synthase from Azorhizobium caulinodans (strain ATCC 43989 / DSM 5975 / JCM 20966 / LMG 6465 / NBRC 14845 / NCIMB 13405 / ORS 571).